Here is a 128-residue protein sequence, read N- to C-terminus: Glycoprotein hormone alpha-2 (128 aa).

An N-terminal signal peptide occupies residues 1–20 (MPMAPRVLLLCLLGLAVTEG). 4 disulfides stabilise this stretch: Cys-30-Cys-88, Cys-47-Cys-102, Cys-56-Cys-118, and Cys-60-Cys-120. N-linked (GlcNAc...) asparagine glycans are attached at residues Asn-36 and Asn-80.

The protein belongs to the glycoprotein hormones subunit alpha family. As to quaternary structure, heterodimer with GPHB5; this heterodimer interacts with thyroid-stimulating hormone receptor (TSHR), and hence stimulates cAMP production.

Its subcellular location is the secreted. Its function is as follows. Functions as a heterodimeric glycoprotein hormone with GPHB5 able to bind and activate the thyroid-stimulating hormone receptor (TSHR), leading to increased cAMP production. Plays a central role in controlling thyroid cell metabolism. The protein is Glycoprotein hormone alpha-2 (Gpha2) of Mus musculus (Mouse).